Here is a 567-residue protein sequence, read N- to C-terminus: Urease subunit alpha (567 aa).

Residues 129-567 form the Urease domain; the sequence is GGIDVHVHFI…VPMSQRYFLF (439 aa). Residues H134, H136, and K217 each coordinate Ni(2+). K217 bears the N6-carboxylysine mark. Residue H219 participates in substrate binding. The Ni(2+) site is built by H246 and H272. Residue H320 is the Proton donor of the active site. D360 provides a ligand contact to Ni(2+).

Belongs to the metallo-dependent hydrolases superfamily. Urease alpha subunit family. In terms of assembly, heterotrimer of UreA (gamma), UreB (beta) and UreC (alpha) subunits. Three heterotrimers associate to form the active enzyme. Requires Ni cation as cofactor. In terms of processing, carboxylation allows a single lysine to coordinate two nickel ions.

The protein localises to the cytoplasm. The catalysed reaction is urea + 2 H2O + H(+) = hydrogencarbonate + 2 NH4(+). Its pathway is nitrogen metabolism; urea degradation; CO(2) and NH(3) from urea (urease route): step 1/1. This Blochmanniella floridana protein is Urease subunit alpha.